The sequence spans 287 residues: Shikimate dehydrogenase (NADP(+)) (287 aa).

Shikimate is bound by residues Ser20–Ser22 and Thr67. Lys71 (proton acceptor) is an active-site residue. Glu84 is a binding site for NADP(+). Residues Asn93 and Asp108 each contribute to the shikimate site. NADP(+)-binding positions include Gly132–Ala136, Asn156–Arg161, and Met226. Shikimate is bound at residue Tyr228. Gly250 provides a ligand contact to NADP(+).

It belongs to the shikimate dehydrogenase family. In terms of assembly, homodimer.

It catalyses the reaction shikimate + NADP(+) = 3-dehydroshikimate + NADPH + H(+). It participates in metabolic intermediate biosynthesis; chorismate biosynthesis; chorismate from D-erythrose 4-phosphate and phosphoenolpyruvate: step 4/7. In terms of biological role, involved in the biosynthesis of the chorismate, which leads to the biosynthesis of aromatic amino acids. Catalyzes the reversible NADPH linked reduction of 3-dehydroshikimate (DHSA) to yield shikimate (SA). This Bordetella parapertussis (strain 12822 / ATCC BAA-587 / NCTC 13253) protein is Shikimate dehydrogenase (NADP(+)).